The sequence spans 640 residues: Chaperone protein DnaK (640 aa).

A Phosphothreonine; by autocatalysis modification is found at Thr196. The segment covering 547–569 (GDKIPSDKRPALEGALEKLKDAT) has biased composition (basic and acidic residues). 2 disordered regions span residues 547–575 (GDKI…GTTE) and 595–640 (LYQA…GNGK). Polar residues predominate over residues 603-615 (TNASEPTQNTDGS). Acidic residues predominate over residues 625–634 (GEVENAEFEV).

This sequence belongs to the heat shock protein 70 family.

In terms of biological role, acts as a chaperone. This chain is Chaperone protein DnaK, found in Chlorobium phaeobacteroides (strain DSM 266 / SMG 266 / 2430).